The following is a 584-amino-acid chain: Proline--tRNA ligase (584 aa).

This sequence belongs to the class-II aminoacyl-tRNA synthetase family. ProS type 1 subfamily. As to quaternary structure, homodimer.

It localises to the cytoplasm. It carries out the reaction tRNA(Pro) + L-proline + ATP = L-prolyl-tRNA(Pro) + AMP + diphosphate. In terms of biological role, catalyzes the attachment of proline to tRNA(Pro) in a two-step reaction: proline is first activated by ATP to form Pro-AMP and then transferred to the acceptor end of tRNA(Pro). As ProRS can inadvertently accommodate and process non-cognate amino acids such as alanine and cysteine, to avoid such errors it has two additional distinct editing activities against alanine. One activity is designated as 'pretransfer' editing and involves the tRNA(Pro)-independent hydrolysis of activated Ala-AMP. The other activity is designated 'posttransfer' editing and involves deacylation of mischarged Ala-tRNA(Pro). The misacylated Cys-tRNA(Pro) is not edited by ProRS. The chain is Proline--tRNA ligase from Mycobacterium sp. (strain KMS).